Reading from the N-terminus, the 219-residue chain is Elongation factor Ts (219 aa).

Residues 82–85 (TDFV) are involved in Mg(2+) ion dislocation from EF-Tu.

The protein belongs to the EF-Ts family.

The protein resides in the cytoplasm. Functionally, associates with the EF-Tu.GDP complex and induces the exchange of GDP to GTP. It remains bound to the aminoacyl-tRNA.EF-Tu.GTP complex up to the GTP hydrolysis stage on the ribosome. The protein is Elongation factor Ts of Gloeobacter violaceus (strain ATCC 29082 / PCC 7421).